Here is a 432-residue protein sequence, read N- to C-terminus: Histidinol dehydrogenase (432 aa).

Tyrosine 133, glutamine 194, and asparagine 217 together coordinate NAD(+). Serine 240, glutamine 262, and histidine 265 together coordinate substrate. Residues glutamine 262 and histidine 265 each coordinate Zn(2+). Active-site proton acceptor residues include glutamate 330 and histidine 331. Substrate contacts are provided by histidine 331, aspartate 364, glutamate 418, and histidine 423. Position 364 (aspartate 364) interacts with Zn(2+). Histidine 423 provides a ligand contact to Zn(2+).

The protein belongs to the histidinol dehydrogenase family. It depends on Zn(2+) as a cofactor.

The catalysed reaction is L-histidinol + 2 NAD(+) + H2O = L-histidine + 2 NADH + 3 H(+). It participates in amino-acid biosynthesis; L-histidine biosynthesis; L-histidine from 5-phospho-alpha-D-ribose 1-diphosphate: step 9/9. Its function is as follows. Catalyzes the sequential NAD-dependent oxidations of L-histidinol to L-histidinaldehyde and then to L-histidine. The polypeptide is Histidinol dehydrogenase (Nitrosomonas europaea (strain ATCC 19718 / CIP 103999 / KCTC 2705 / NBRC 14298)).